Reading from the N-terminus, the 917-residue chain is Transcriptional regulatory protein SEF1 (917 aa).

The interval 1-88 (MKFEKGKVRI…SKPTGHRPVT (88 aa)) is disordered. The segment covering 13 to 27 (KPSPTPTNPQTPLPL) has biased composition (pro residues). Residues 56 to 70 (SNSTASTPNSATPTS) are compositionally biased toward low complexity. A compositionally biased stretch (polar residues) spans 71–81 (VGTPPQKTSKP). The segment at residues 90 to 120 (CTFCRQHKIKCNASDNYPNPCERCKKMGLKC) is a DNA-binding region (zn(2)-C6 fungal-type). A coiled-coil region spans residues 129–164 (RKGSQIQSLKSDVDELKAKIEMLTKNESLLTQALNQ). Disordered regions lie at residues 168–212 (NHAS…ASPI) and 778–849 (QQYP…PFIL). Positions 171-184 (SQQQQSSGSQSQQQ) are enriched in low complexity. Residues 191–212 (RALSYTSANSSPQVAFSNASPI) are compositionally biased toward polar residues. The segment covering 778–827 (QQYPMQQDQQQQEPSQQQQQKHSQQSQQYQQQQQSNQQQPHLQHQRQFQQ) has biased composition (low complexity).

Interacts with SSN3 and SFU1. Post-translationally, phosphorylated by SSN3 under iron-depleted conditions which leads to nuclear localization.

Its subcellular location is the cytoplasm. The protein localises to the nucleus. Its function is as follows. Transcription factor which plays an essential role in virulence by activating the transcription of iron uptake genes such as FRE7 in iron-poor environments such as the host bloodstream and internal organs. Promotes commensalism in a mouse model of gastrointestinal infection. This Candida albicans (strain SC5314 / ATCC MYA-2876) (Yeast) protein is Transcriptional regulatory protein SEF1 (SEF1).